A 397-amino-acid polypeptide reads, in one-letter code: MQKKTLSDITIQGKRILMRVDFNVPLNDEREITDDKRIVEALPSIRKILDNGGRLILMSHLGRPKGKVNPIFSLAPVAAKLSELIDTPVAMAEDCIGTEVMQSALALQDGEVMLLENLRFHPEEEANDPEFAKELAALGEMYVNDAFGTAHRAHASTEGITHFVPTAVAGYLIEKELMYLGKALEKPERPFVAILGGSKISGKIDVLENLFKKVDTVLIGGAMVFTFFKAMGLETGSSLVEDNKLELALSLLEQAKNRNIKLLLPQDVIAAPELSADAPFHAVSVKELEAGEMGLDIGPLTIEAYRQEILGARTILWNGPMGVFEIDSFANGTFAVAEAMALATAKGATTIIGGGDSAAAVAKAGLASKMTHISTGGGASLEFLEGKELPGIAALND.

Substrate contacts are provided by residues 21–23 (DFN), Arg37, 60–63 (HLGR), Arg119, and Arg152. ATP contacts are provided by residues Lys203, Gly294, Glu325, and 354-357 (GGDS).

The protein belongs to the phosphoglycerate kinase family. In terms of assembly, monomer.

The protein resides in the cytoplasm. It catalyses the reaction (2R)-3-phosphoglycerate + ATP = (2R)-3-phospho-glyceroyl phosphate + ADP. It functions in the pathway carbohydrate degradation; glycolysis; pyruvate from D-glyceraldehyde 3-phosphate: step 2/5. The protein is Phosphoglycerate kinase of Chlorobium phaeovibrioides (strain DSM 265 / 1930) (Prosthecochloris vibrioformis (strain DSM 265)).